Here is a 366-residue protein sequence, read N- to C-terminus: Putative zinc metalloprotease slr1821 (366 aa).

Histidine 20 lines the Zn(2+) pocket. Glutamate 21 is a catalytic residue. Histidine 24 provides a ligand contact to Zn(2+). 3 helical membrane-spanning segments follow: residues 95–115, 293–313, and 325–345; these read AIVI…LLIG, AVIN…FLLI, and FQMG…VFLI. A PDZ domain is found at 106–188; that stretch reads LVFAYFLLIG…VPITVEVQRG (83 aa).

Belongs to the peptidase M50B family. Zn(2+) is required as a cofactor.

The protein resides in the cell inner membrane. In Synechocystis sp. (strain ATCC 27184 / PCC 6803 / Kazusa), this protein is Putative zinc metalloprotease slr1821.